The primary structure comprises 518 residues: Membrane-bound lytic murein transglycosylase F (518 aa).

A signal peptide spans 1–21 (MKKLKINYLFIGILALLLAVA). Residues 22-269 (LWPSIPWFGK…RIEEKYLGHG (248 aa)) form a non-LT domain region. Positions 270-518 (DDFDYVDTRT…SRKGSEEKQN (249 aa)) are LT domain. The active site involves Glu-314.

In the N-terminal section; belongs to the bacterial solute-binding protein 3 family. The protein in the C-terminal section; belongs to the transglycosylase Slt family.

The protein localises to the cell outer membrane. The catalysed reaction is Exolytic cleavage of the (1-&gt;4)-beta-glycosidic linkage between N-acetylmuramic acid (MurNAc) and N-acetylglucosamine (GlcNAc) residues in peptidoglycan, from either the reducing or the non-reducing ends of the peptidoglycan chains, with concomitant formation of a 1,6-anhydrobond in the MurNAc residue.. Functionally, murein-degrading enzyme that degrades murein glycan strands and insoluble, high-molecular weight murein sacculi, with the concomitant formation of a 1,6-anhydromuramoyl product. Lytic transglycosylases (LTs) play an integral role in the metabolism of the peptidoglycan (PG) sacculus. Their lytic action creates space within the PG sacculus to allow for its expansion as well as for the insertion of various structures such as secretion systems and flagella. The polypeptide is Membrane-bound lytic murein transglycosylase F (Escherichia coli (strain SMS-3-5 / SECEC)).